The chain runs to 303 residues: Olfactory receptor 10A2 (303 aa).

The Extracellular segment spans residues 1 to 12 (MSFSSLPTEIQS). The chain crosses the membrane as a helical span at residues 13 to 33 (LLFLTFLTIYLVTLMGNCLII). Residues 34 to 41 (LVTLADPM) lie on the Cytoplasmic side of the membrane. The helical transmembrane segment at 42–62 (LHSPMYFFLRNLSFLEIGFNL) threads the bilayer. Over 63–86 (VIVPKMLGTLLAQDTTISFLGCAT) the chain is Extracellular. Cys84 and Cys176 form a disulfide bridge. A helical membrane pass occupies residues 87-107 (QMYFFFFFGVAECFLLATMAY). Residues 108–126 (DRYVAICSPLHYPVIMNQR) are Cytoplasmic-facing. A helical membrane pass occupies residues 127–147 (TRAKLAAASWFPGFPVATVQT). At 148-184 (TWLFSFPFCGTNKVNHFFCDSPPVLRLVCADTALFEI) the chain is on the extracellular side. Residues 185–204 (YAIVGTILVVMIPCLLILCS) form a helical membrane-spanning segment. Over 205 to 224 (YTHIAAAILKIPSAKGKNKA) the chain is Cytoplasmic. The helical transmembrane segment at 225–245 (FSTCSSHLLVVSLFYISLSLT) threads the bilayer. The Extracellular segment spans residues 246–258 (YFRPKSNNSPEGK). Residues 259–279 (KLLSLSYTVMTPMLNPIIYSL) form a helical membrane-spanning segment. The Cytoplasmic segment spans residues 280–301 (RNNEVKNALSRTVSKALALRNC).

This sequence belongs to the G-protein coupled receptor 1 family.

The protein resides in the cell membrane. Its function is as follows. Odorant receptor. This Homo sapiens (Human) protein is Olfactory receptor 10A2 (OR10A2).